Consider the following 444-residue polypeptide: Serine carboxypeptidase-like 50 (444 aa).

Positions 1–22 are cleaved as a signal peptide; sequence MEQATTLFILLSTLLLAVSVES. The cysteines at positions 79 and 308 are disulfide-linked. Ser-170 is an active-site residue. Asn-263 is a glycosylation site (N-linked (GlcNAc...) asparagine). Residue Asp-345 is part of the active site. N-linked (GlcNAc...) asparagine glycosylation occurs at Asn-361. His-403 is a catalytic residue.

This sequence belongs to the peptidase S10 family. As to expression, ubiquitous.

Its subcellular location is the secreted. In terms of biological role, probable carboxypeptidase. This chain is Serine carboxypeptidase-like 50 (SCPL50), found in Arabidopsis thaliana (Mouse-ear cress).